Consider the following 289-residue polypeptide: Probable early E4 33 kDa protein (289 aa).

The protein belongs to the adenoviridae E4 30 to 34 kDa protein family. In terms of assembly, interacts with E1B-55k.

It localises to the host nucleus. The protein localises to the host cytoplasm. Functionally, plays a major role to prevent cellular inhibition of viral genome replication by nuclear bodies. Assembles an SCF-like E3 ubiquitin ligase complex based on the cellular proteins ELOB, ELOC, CUL5 and RBX1, in cooperation with viral E1B-55K. This viral RING-type ligase ubiquitinates cellular substrates prior to proteasomal degradation: p53/TP53, LIG4, MRE11-RAD50-NBS1 (MRN) complex, ITGA3, DAXX and BLM. The chain is Probable early E4 33 kDa protein from Mus musculus (Mouse).